Reading from the N-terminus, the 346-residue chain is Dimethyladenosine transferase 1, mitochondrial (346 aa).

The transit peptide at 1–27 directs the protein to the mitochondrion; that stretch reads MAASGKLSTCRLPPLPTIREIIKLLRL. L38, G63, E85, K86, D111, V112, and N141 together coordinate S-adenosyl-L-methionine.

This sequence belongs to the class I-like SAM-binding methyltransferase superfamily. rRNA adenine N(6)-methyltransferase family. KsgA subfamily. As to quaternary structure, interacts with mitochondrial RNA polymerase POLRMT. Interacts with TFAM. Bound to the maturing mtSSU until the late stages of assembly. In terms of tissue distribution, ubiquitously expressed.

The protein localises to the mitochondrion. The enzyme catalyses adenosine(N)/adenosine(N+1) in rRNA + 4 S-adenosyl-L-methionine = N(6)-dimethyladenosine(N)/N(6)-dimethyladenosine(N+1) in rRNA + 4 S-adenosyl-L-homocysteine + 4 H(+). Functionally, mitochondrial methyltransferase which uses S-adenosyl methionine to dimethylate two highly conserved adjacent adenosine residues (A1583 and A1584) within the loop of helix 45 at the 3-prime end of 12S rRNA, thereby regulating the assembly or stability of the small subunit of the mitochondrial ribosome. Also required for basal transcription of mitochondrial DNA, probably via its interaction with POLRMT and TFAM. Stimulates transcription independently of the methyltransferase activity. The sequence is that of Dimethyladenosine transferase 1, mitochondrial from Homo sapiens (Human).